The sequence spans 172 residues: Ribosome maturation factor RimM (172 aa).

In terms of domain architecture, PRC barrel spans 96–168; it reads DGEFYYHEII…RIDVTVLEGL (73 aa).

The protein belongs to the RimM family. In terms of assembly, binds ribosomal protein uS19.

The protein localises to the cytoplasm. An accessory protein needed during the final step in the assembly of 30S ribosomal subunit, possibly for assembly of the head region. Essential for efficient processing of 16S rRNA. May be needed both before and after RbfA during the maturation of 16S rRNA. It has affinity for free ribosomal 30S subunits but not for 70S ribosomes. The protein is Ribosome maturation factor RimM of Streptococcus mutans serotype c (strain ATCC 700610 / UA159).